Here is a 145-residue protein sequence, read N- to C-terminus: Hemoglobin subunit beta (145 aa).

The 145-residue stretch at Met1–His145 folds into the Globin domain. The residue at position 11 (Thr11) is a Phosphothreonine. A Phosphoserine modification is found at Ser43. Lys58 bears the N6-acetyllysine mark. His62 is a heme b binding site. Residue Lys81 is modified to N6-acetyllysine. His91 contributes to the heme b binding site. Residue Cys92 is modified to S-nitrosocysteine.

The protein belongs to the globin family. In terms of assembly, heterotetramer of two alpha chains and two beta chains. Red blood cells.

Involved in oxygen transport from the lung to the various peripheral tissues. This chain is Hemoglobin subunit beta (HBB), found in Bos gaurus frontalis (Domestic gayal).